A 143-amino-acid chain; its full sequence is Peptidyl-prolyl cis-trans isomerase B (143 aa).

The PPIase cyclophilin-type domain maps to 1-143; that stretch reads MKTGYFLLED…DVMKEVRVEG (143 aa).

Belongs to the cyclophilin-type PPIase family.

The protein localises to the cytoplasm. It catalyses the reaction [protein]-peptidylproline (omega=180) = [protein]-peptidylproline (omega=0). With respect to regulation, inhibited by cyclosporin A (CsA). PPIases accelerate the folding of proteins. It catalyzes the cis-trans isomerization of proline imidic peptide bonds in oligopeptides. The chain is Peptidyl-prolyl cis-trans isomerase B (ppiB) from Bacillus subtilis (strain 168).